The chain runs to 177 residues: ATP synthase subunit delta (177 aa).

The protein belongs to the ATPase delta chain family. In terms of assembly, F-type ATPases have 2 components, F(1) - the catalytic core - and F(0) - the membrane proton channel. F(1) has five subunits: alpha(3), beta(3), gamma(1), delta(1), epsilon(1). F(0) has three main subunits: a(1), b(2) and c(10-14). The alpha and beta chains form an alternating ring which encloses part of the gamma chain. F(1) is attached to F(0) by a central stalk formed by the gamma and epsilon chains, while a peripheral stalk is formed by the delta and b chains.

The protein localises to the cell membrane. Its function is as follows. F(1)F(0) ATP synthase produces ATP from ADP in the presence of a proton or sodium gradient. F-type ATPases consist of two structural domains, F(1) containing the extramembraneous catalytic core and F(0) containing the membrane proton channel, linked together by a central stalk and a peripheral stalk. During catalysis, ATP synthesis in the catalytic domain of F(1) is coupled via a rotary mechanism of the central stalk subunits to proton translocation. Functionally, this protein is part of the stalk that links CF(0) to CF(1). It either transmits conformational changes from CF(0) to CF(1) or is implicated in proton conduction. This is ATP synthase subunit delta from Macrococcus caseolyticus (strain JCSC5402) (Macrococcoides caseolyticum).